We begin with the raw amino-acid sequence, 910 residues long: Protein CHROMATIN REMODELING 25 (910 aa).

Composition is skewed to acidic residues over residues 1–18 (MEEE…DDSS) and 26–39 (QDSE…ECED). Residues 1-39 (MEEEDEEILSSSDCDDSSDSYKDDSQDSEGENDNPECED) are disordered. Residues 198-371 (LHGSANINGC…FAMVNFTNPG (174 aa)) form the Helicase ATP-binding domain. ATP is bound at residue 211-218 (DDMGLGKT). The DEAH box signature appears at 322–325 (DEAH). Residues 396–417 (TEEEKNLAADRSAELSSKVNQF) are a coiled coil. The 159-residue stretch at 538–696 (VLSRLLANLR…QTDNSTRQGN (159 aa)) folds into the Helicase C-terminal domain. The interval 828–861 (VSPKTVESEEHNRNQPVNKRAFNKPQQRPREPLQ) is disordered.

It belongs to the SNF2/RAD54 helicase family. Interacts with RAD51. Binds to the geminivirus mungbean yellow mosaic virus (MYMV) and to the tomato leaf curl virus (ToLCV) replication-associated proteins. In terms of tissue distribution, expressed ubiquitously, with the highest levels of expression in flower buds. Present in flower buds (at protein level).

It localises to the nucleus. Dissociates RAD51 from nucleoprotein filaments formed on dsDNA. Could be involved in the turnover of RAD51 protein-dsDNA filaments. Addition of RAD54 overcomes inhibition of DNA strand exchange by RAD51 bound to substrate dsDNA. Species preference in the RAD51 dissociation and DNA strand exchange assays underlines the importance of specific RAD54-RAD51 interactions. RAD51 is unable to release dsDNA upon ATP hydrolysis, leaving it stuck on the heteroduplex DNA product after DNA strand exchange. Involved in DNA repair and mitotic recombination. Functions in the homologous recombinational DNA repair (RAD52) pathway. Required for synthesis-dependent strand annealing (SDSA) during double-strand break repair. Its function is as follows. Facilitates geminiviral replication (e.g. geminivirus mungbean yellow mosaic virus (MYMV) and tomato leaf curl virus (ToLCV)). This Arabidopsis thaliana (Mouse-ear cress) protein is Protein CHROMATIN REMODELING 25 (CHR25).